Here is a 356-residue protein sequence, read N- to C-terminus: UDP-N-acetylglucosamine--N-acetylmuramyl-(pentapeptide) pyrophosphoryl-undecaprenol N-acetylglucosamine transferase (356 aa).

UDP-N-acetyl-alpha-D-glucosamine is bound by residues 12-14 (TAG), Arg166, Ser196, and Gln291.

This sequence belongs to the glycosyltransferase 28 family. MurG subfamily.

The protein localises to the cell membrane. The enzyme catalyses di-trans,octa-cis-undecaprenyl diphospho-N-acetyl-alpha-D-muramoyl-L-alanyl-D-glutamyl-meso-2,6-diaminopimeloyl-D-alanyl-D-alanine + UDP-N-acetyl-alpha-D-glucosamine = di-trans,octa-cis-undecaprenyl diphospho-[N-acetyl-alpha-D-glucosaminyl-(1-&gt;4)]-N-acetyl-alpha-D-muramoyl-L-alanyl-D-glutamyl-meso-2,6-diaminopimeloyl-D-alanyl-D-alanine + UDP + H(+). Its pathway is cell wall biogenesis; peptidoglycan biosynthesis. In terms of biological role, cell wall formation. Catalyzes the transfer of a GlcNAc subunit on undecaprenyl-pyrophosphoryl-MurNAc-pentapeptide (lipid intermediate I) to form undecaprenyl-pyrophosphoryl-MurNAc-(pentapeptide)GlcNAc (lipid intermediate II). The chain is UDP-N-acetylglucosamine--N-acetylmuramyl-(pentapeptide) pyrophosphoryl-undecaprenol N-acetylglucosamine transferase from Geobacillus thermodenitrificans (strain NG80-2).